The following is a 308-amino-acid chain: Porphobilinogen deaminase (308 aa).

The residue at position 240 (Cys240) is an S-(dipyrrolylmethanemethyl)cysteine.

This sequence belongs to the HMBS family. Monomer. Dipyrromethane serves as cofactor.

The catalysed reaction is 4 porphobilinogen + H2O = hydroxymethylbilane + 4 NH4(+). The protein operates within porphyrin-containing compound metabolism; protoporphyrin-IX biosynthesis; coproporphyrinogen-III from 5-aminolevulinate: step 2/4. Functionally, tetrapolymerization of the monopyrrole PBG into the hydroxymethylbilane pre-uroporphyrinogen in several discrete steps. The polypeptide is Porphobilinogen deaminase (Laribacter hongkongensis (strain HLHK9)).